We begin with the raw amino-acid sequence, 353 residues long: Photosystem II D2 protein (353 aa).

N-acetylthreonine is present on Thr2. Thr2 carries the phosphothreonine modification. The chain crosses the membrane as a helical span at residues 41–61 (CAYFALGGWFTGTTFVTSWYT). His118 lines the chlorophyll a pocket. A helical transmembrane segment spans residues 125 to 141 (GFMLRQFELARSVQLRP). The pheophytin a site is built by Gln130 and Asn143. Residues 153–166 (VFVSVFLIYPLGQS) traverse the membrane as a helical segment. Residue His198 participates in chlorophyll a binding. The helical transmembrane segment at 208–228 (AALLCAIHGATVENTLFEDGD) threads the bilayer. Residues His215 and Phe262 each coordinate a plastoquinone. His215 is a Fe cation binding site. Residue His269 participates in Fe cation binding. A helical transmembrane segment spans residues 279-295 (GLWMSALGVVGLALNLR).

This sequence belongs to the reaction center PufL/M/PsbA/D family. As to quaternary structure, PSII is composed of 1 copy each of membrane proteins PsbA, PsbB, PsbC, PsbD, PsbE, PsbF, PsbH, PsbI, PsbJ, PsbK, PsbL, PsbM, PsbT, PsbX, PsbY, PsbZ, Psb30/Ycf12, at least 3 peripheral proteins of the oxygen-evolving complex and a large number of cofactors. It forms dimeric complexes. The D1/D2 heterodimer binds P680, chlorophylls that are the primary electron donor of PSII, and subsequent electron acceptors. It shares a non-heme iron and each subunit binds pheophytin, quinone, additional chlorophylls, carotenoids and lipids. There is also a Cl(-1) ion associated with D1 and D2, which is required for oxygen evolution. The PSII complex binds additional chlorophylls, carotenoids and specific lipids. is required as a cofactor.

It localises to the plastid. The protein localises to the chloroplast thylakoid membrane. The enzyme catalyses 2 a plastoquinone + 4 hnu + 2 H2O = 2 a plastoquinol + O2. In terms of biological role, photosystem II (PSII) is a light-driven water:plastoquinone oxidoreductase that uses light energy to abstract electrons from H(2)O, generating O(2) and a proton gradient subsequently used for ATP formation. It consists of a core antenna complex that captures photons, and an electron transfer chain that converts photonic excitation into a charge separation. The D1/D2 (PsbA/PsbD) reaction center heterodimer binds P680, the primary electron donor of PSII as well as several subsequent electron acceptors. D2 is needed for assembly of a stable PSII complex. This Morus indica (Mulberry) protein is Photosystem II D2 protein.